The chain runs to 251 residues: HTH-type transcriptional regulator UlaR (251 aa).

The region spanning glutamate 3–alanine 58 is the HTH deoR-type domain. Residues valine 20–aspartate 39 constitute a DNA-binding region (H-T-H motif).

Its subcellular location is the cytoplasm. Functionally, represses ulaG and the ulaABCDEF operon. This Salmonella agona (strain SL483) protein is HTH-type transcriptional regulator UlaR.